The following is a 375-amino-acid chain: Pectate lyase B (375 aa).

The N-terminal stretch at 1–22 (MKSLITPIAAGLLLAFSQYSLA) is a signal peptide. An intrachain disulfide couples Cys93 to Cys176. 4 residues coordinate Ca(2+): Asp150, Asp152, Glu187, and Asp191. Residue Arg240 is part of the active site. Cys351 and Cys374 are joined by a disulfide.

It belongs to the polysaccharide lyase 1 family. PLADES subfamily. It depends on Ca(2+) as a cofactor.

The protein resides in the secreted. It carries out the reaction Eliminative cleavage of (1-&gt;4)-alpha-D-galacturonan to give oligosaccharides with 4-deoxy-alpha-D-galact-4-enuronosyl groups at their non-reducing ends.. Its pathway is glycan metabolism; pectin degradation; 2-dehydro-3-deoxy-D-gluconate from pectin: step 2/5. Functionally, involved in maceration and soft-rotting of plant tissue. This Dickeya chrysanthemi (Pectobacterium chrysanthemi) protein is Pectate lyase B (pelB).